The primary structure comprises 260 residues: MNWTREIEQYKQVVASYKLKMKRMEMKISDISEEKRQSSMLFDPAGTHSDDKEVCEYWRMINYVDQNFNLIGGMIKMHQYCLSVYNKSGSGYFRDGANFFRNADPLNLSNDSKIPIQMVCMNLWTCEKIEIWYRDFYSHRYLEQVDGKEKYDEDQYTVFDQLFDNLGSDASTLMEQQIELMRNYCQAKAELTNMVEFQRGVRFWRMVSPIHLPRNYQLALILAKRNGWVHEDVERWFRVLYDESCCVGARGRDVYLNFGR.

Residues 1-38 adopt a coiled-coil conformation; it reads MNWTREIEQYKQVVASYKLKMKRMEMKISDISEEKRQS.

This is an uncharacterized protein from Caenorhabditis elegans.